We begin with the raw amino-acid sequence, 221 residues long: Probable N-acetyl-alpha-D-glucosaminyl L-malate deacetylase 2 (221 aa).

The Zn(2+) site is built by His11, Asp14, and His125.

The protein belongs to the PIGL family. Zn(2+) serves as cofactor.

It carries out the reaction (S)-malyl N-acetyl-alpha-D-glucosaminide + H2O = (S)-malyl alpha-D-glucosaminide + acetate. Involved in bacillithiol (BSH) biosynthesis. Catalyzes the second step of the pathway, the deacetylation of N-acetylglucosaminylmalate (GlcNAc-Mal) to glucosamine malate (GlcN-Mal). The sequence is that of Probable N-acetyl-alpha-D-glucosaminyl L-malate deacetylase 2 from Bacillus subtilis (strain 168).